A 139-amino-acid chain; its full sequence is uncharacterized protein (139 aa).

This is an uncharacterized protein from Sinorhizobium fredii (strain NBRC 101917 / NGR234).